A 758-amino-acid chain; its full sequence is Microtubule-associated protein tau (758 aa).

Residues 1–26 (MAEPRQEFEVMEDHAGTYGLGDRKDQ) show a composition bias toward basic and acidic residues. The interval 1 to 573 (MAEPRQEFEV…PVPMPDLKNV (573 aa)) is disordered. Residue Ala2 is modified to N-acetylalanine. Tyr18 carries the phosphotyrosine; by FYN modification. Residue Tyr29 is modified to Phosphotyrosine. Residue Lys44 forms a Glycyl lysine isopeptide (Lys-Gly) (interchain with G-Cter in ubiquitin) linkage. Residues Ser46 and Ser61 each carry the phosphoserine modification. The span at 61–71 (SETSDAKSTPT) shows a compositional bias: polar residues. Thr69 and Thr71 each carry phosphothreonine. Lys87 is a glycosylation site (N-linked (Glc) (glycation) lysine; in PHF-tau; in vitro). Thr111 carries the phosphothreonine modification. Basic and acidic residues-rich tracts occupy residues 179–189 (EGGRHAPELLK) and 207–216 (GGKERPGSKE). Ser214 is subject to Phosphoserine; by SGK1. The segment covering 217 to 228 (EVDEDRDVDESS) has biased composition (acidic residues). The span at 314 to 323 (EQAHSEEHLG) shows a compositional bias: basic and acidic residues. Over residues 324-340 (RAAFPGAPGEGPEARGP) the composition is skewed to low complexity. Composition is skewed to basic and acidic residues over residues 344–356 (EDTKEADLPEPSE) and 381–393 (KSKDGTGSDDKKA). A glycan (N-linked (Glc) (glycation) lysine; in PHF-tau; in vitro) is linked at Lys383. A compositionally biased stretch (low complexity) spans 442–453 (VSSVTSRTGSSG). Basic and acidic residues predominate over residues 455 to 466 (KEMKLKGADGKT). The N-linked (Glc) (glycation) lysine; in PHF-tau; in vitro glycan is linked to Lys467. Thr470 is modified (phosphothreonine; by PDPK1). At Arg472 the chain carries Omega-N-methylarginine. Lys480 carries N-linked (Glc) (glycation) lysine; in PHF-tau; in vitro glycosylation. Residue Lys480 is modified to N6,N6-dimethyllysine; alternate. Lys480 is modified (N6-acetyllysine; alternate). Position 484 is a deamidated asparagine; in tau and PHF-tau; partial (Asn484). Thr486 bears the Phosphothreonine mark. An N-linked (Glc) (glycation) lysine; in PHF-tau; in vitro glycan is attached at Lys491. Over residues 491–503 (KTPPAPKTPPSSG) the composition is skewed to pro residues. Thr492 is subject to Phosphothreonine. Thr498 is modified (phosphothreonine; by PDPK1). Residues Ser502, Ser508, and Ser512 each carry the phosphoserine modification. The segment covering 504 to 531 (EPPKSGDRSGYSSPGSPGTPGSRSRTPS) has biased composition (low complexity). Tyr514 is modified (phosphotyrosine; by TTBK1). Residues Ser515 and Ser516 each carry the phosphoserine; by PDPK1 and TTBK1 modification. Ser519 is subject to Phosphoserine; by CK1, PDPK1 and TTBK1. Residue Thr522 is modified to Phosphothreonine; by CK1 and PDPK1. Ser525 is a glycosylation site (O-linked (GlcNAc) serine). At Thr529 the chain carries Phosphothreonine; by BRSK1, BRSK2, DYRK2 and PDPK1. Position 531 is a phosphoserine; by PKA (Ser531). Position 534 is a phosphothreonine; by PDPK1 (Thr534). N-linked (Glc) (glycation) lysine; in PHF-tau; in vitro glycosylation occurs at Lys542. Lys542 carries the N6-acetyllysine modification. Residue Thr548 is modified to Phosphothreonine; by GSK3-beta and PDPK1. Lys551 carries an N-linked (Glc) (glycation) lysine; in PHF-tau; in vitro glycan. Ser552 is modified (phosphoserine; by PDPK1). Phosphoserine; by PHK is present on Ser554. The O-linked (GlcNAc) serine glycan is linked to Ser555. Tau/MAP repeat units follow at residues 561–591 (QTAPVPMPDLKNVKSKIGSTENLKHQPGGGK), 592–622 (VQIINKKLDLSNVQSKCGSKDNIKHVPGGGS), 623–653 (VQIVYKPVDLSKVTSKCGSLGNIHHKPGGGQ), and 654–685 (VEVKSEKLDFKDRVQSKIGSLDNITHVPGGGN). The microtubule-binding domain stretch occupies residues 561–685 (QTAPVPMPDL…NITHVPGGGN (125 aa)). Lys571 is covalently cross-linked (Glycyl lysine isopeptide (Lys-Gly) (interchain with G-Cter in ubiquitin); in PHF-tau). The N-linked (Glc) (glycation) lysine; in PHF-tau; in vitro glycan is linked to Lys576. Position 576 is an N6-acetyllysine; alternate (Lys576). Position 576 is an N6-methyllysine; alternate (Lys576). Lys576 is covalently cross-linked (Glycyl lysine isopeptide (Lys-Gly) (interchain with G-Cter in ubiquitin); alternate). Ser579 is subject to Phosphoserine; by MARK1, MARK2, MARK3, MARK4, BRSK1, BRSK2 and PHK. Residue Lys584 forms a Glycyl lysine isopeptide (Lys-Gly) (interchain with G-Cter in ubiquitin) linkage. A Deamidated asparagine; in tau and PHF-tau; partial modification is found at Asn596. 2 N-linked (Glc) (glycation) lysine; in PHF-tau; in vitro glycosylation sites follow: Lys597 and Lys598. Lys598 is modified (N6-acetyllysine; alternate). A Glycyl lysine isopeptide (Lys-Gly) (interchain with G-Cter in ubiquitin); alternate cross-link involves residue Lys598. The residue at position 602 (Ser602) is a Phosphoserine; by PHK. Lys607 carries the N6-acetyllysine modification. An intrachain disulfide couples Cys608 to Cys639. Position 610 is a phosphoserine (Ser610). N6-acetyllysine; alternate is present on Lys615. Lys615 is covalently cross-linked (Glycyl lysine isopeptide (Lys-Gly) (interchain with G-Cter in ubiquitin); alternate). Ser622 is modified (phosphoserine; by PHK). Lys628 is subject to N6,N6-dimethyllysine; alternate. 3 positions are modified to N6-acetyllysine; alternate: Lys628, Lys634, and Lys638. Lys628 is covalently cross-linked (Glycyl lysine isopeptide (Lys-Gly) (interchain with G-Cter in ubiquitin); in PHF-tau). Residues Lys634 and Lys638 each participate in a glycyl lysine isopeptide (Lys-Gly) (interchain with G-Cter in ubiquitin); alternate cross-link. Ser641 carries the post-translational modification Phosphoserine. An N6-acetyllysine; alternate mark is found at Lys648, Lys660, and Lys664. Residues Lys648, Lys660, and Lys664 each participate in a glycyl lysine isopeptide (Lys-Gly) (interchain with G-Cter in ubiquitin); alternate cross-link. The N-linked (Glc) (glycation) lysine; in PHF-tau; in vitro glycan is linked to Lys664. Arg666 is subject to Omega-N-methylarginine. Ser669 is modified (phosphoserine; by PHK). Lys670 carries N-linked (Glc) (glycation) lysine; in PHF-tau; in vitro glycosylation. Residue Lys670 forms a Glycyl lysine isopeptide (Lys-Gly) (interchain with G-Cter in ubiquitin); in PHF-tau linkage. Residue Ser673 is modified to Phosphoserine. A glycan (N-linked (Glc) (glycation) lysine; in PHF-tau; in vitro) is linked at Lys686. Lys686 is subject to N6-acetyllysine; alternate. Lys686 participates in a covalent cross-link: Glycyl lysine isopeptide (Lys-Gly) (interchain with G-Cter in ubiquitin); alternate. Lys692 is covalently cross-linked (Glycyl lysine isopeptide (Lys-Gly) (interchain with G-Cter in ubiquitin)). Residue Lys702 is modified to N6-acetyllysine; alternate. Residue Lys702 forms a Glycyl lysine isopeptide (Lys-Gly) (interchain with G-Cter in ubiquitin); alternate linkage. Phosphotyrosine is present on Tyr711. Ser713 is modified (phosphoserine; by CK1 and PDPK1). Residues 715–734 (VVSGDTSPRHLSNVSSTGSI) are disordered. Residue Ser717 is modified to Phosphoserine; alternate. Residue Ser717 is glycosylated (O-linked (GlcNAc) serine; alternate). Residues 718–733 (GDTSPRHLSNVSSTGS) show a composition bias toward polar residues. Thr720 bears the Phosphothreonine mark. Position 721 is a phosphoserine; by CK1 and PDPK1 (Ser721). A Phosphoserine modification is found at Ser726. Ser733 carries the phosphoserine; by CaMK2 and TTBK1 modification. Ser739 is modified (phosphoserine; by PDPK1 and TTBK1). Thr744 carries the phosphothreonine; by TTBK1 modification.

As to quaternary structure, interacts with MARK1, MARK2, MARK3 and MARK4. Interacts with PSMC2 through SQSTM1. Interacts with SQSTM1 when polyubiquitinated. Interacts with FKBP4. Binds to CSNK1D. Interacts with SGK1. Interacts with EPM2A; the interaction dephosphorylates MAPT at Ser-396. Interacts with PIN1. Interacts with LRRK2. Interacts with LRP1, leading to endocytosis; this interaction is reduced in the presence of LRPAP1/RAP. Phosphorylation at serine and threonine residues in S-P or T-P motifs by proline-directed protein kinases (PDPK1, CDK1, CDK5, GSK3, MAPK) (only 2-3 sites per protein in interphase, seven-fold increase in mitosis, and in the form associated with paired helical filaments (PHF-tau)), and at serine residues in K-X-G-S motifs by MAP/microtubule affinity-regulating kinase (MARK1, MARK2, MARK3 or MARK4), causing detachment from microtubules, and their disassembly. Phosphorylation decreases with age. Phosphorylation within tau/MAP's repeat domain or in flanking regions seems to reduce tau/MAP's interaction with, respectively, microtubules or plasma membrane components. Phosphorylation on Ser-610, Ser-622, Ser-641 and Ser-673 in several isoforms during mitosis. Phosphorylation at Ser-548 by GSK3B reduces ability to bind and stabilize microtubules. Phosphorylation at Ser-579 by BRSK1 and BRSK2 in neurons affects ability to bind microtubules and plays a role in neuron polarization. Phosphorylated at Ser-554, Ser-579, Ser-602, Ser-606 and Ser-669 by PHK. Phosphorylation at Ser-214 by SGK1 mediates microtubule depolymerization and neurite formation in hippocampal neurons. There is a reciprocal down-regulation of phosphorylation and O-GlcNAcylation. Phosphorylation on Ser-717 completely abolishes the O-GlcNAcylation on this site, while phosphorylation on Ser-713 and Ser-721 reduces glycosylation by a factor of 2 and 4 respectively. Phosphorylation on Ser-721 is reduced by about 41.5% by GlcNAcylation on Ser-717. Dephosphorylated at several serine and threonine residues by the serine/threonine phosphatase PPP5C. Post-translationally, polyubiquitinated. Requires functional TRAF6 and may provoke SQSTM1-dependent degradation by the proteasome. PHF-tau can be modified by three different forms of polyubiquitination. 'Lys-48'-linked polyubiquitination is the major form, 'Lys-6'-linked and 'Lys-11'-linked polyubiquitination also occur. In terms of processing, O-glycosylated. O-GlcNAcylation content is around 8.2%. There is reciprocal down-regulation of phosphorylation and O-GlcNAcylation. Phosphorylation on Ser-717 completely abolishes the O-GlcNAcylation on this site, while phosphorylation on Ser-713 and Ser-721 reduces O-GlcNAcylation by a factor of 2 and 4 respectively. O-GlcNAcylation on Ser-717 decreases the phosphorylation on Ser-721 by about 41.5%. Glycation of PHF-tau, but not normal brain TAU/MAPT. Glycation is a non-enzymatic post-translational modification that involves a covalent linkage between a sugar and an amino group of a protein molecule forming ketoamine. Subsequent oxidation, fragmentation and/or cross-linking of ketoamine leads to the production of advanced glycation endproducts (AGES). Glycation may play a role in stabilizing PHF aggregation leading to tangle formation in AD. In terms of tissue distribution, expressed in neurons. Isoform PNS-tau is expressed in the peripheral nervous system while the others are expressed in the central nervous system.

It localises to the cytoplasm. The protein localises to the cytosol. The protein resides in the cell membrane. Its subcellular location is the cytoskeleton. It is found in the cell projection. It localises to the axon. The protein localises to the dendrite. The protein resides in the secreted. Promotes microtubule assembly and stability, and might be involved in the establishment and maintenance of neuronal polarity. The C-terminus binds axonal microtubules while the N-terminus binds neural plasma membrane components, suggesting that tau functions as a linker protein between both. Axonal polarity is predetermined by TAU/MAPT localization (in the neuronal cell) in the domain of the cell body defined by the centrosome. The short isoforms allow plasticity of the cytoskeleton whereas the longer isoforms may preferentially play a role in its stabilization. This is Microtubule-associated protein tau from Homo sapiens (Human).